Consider the following 282-residue polypeptide: 2-dehydro-3-deoxyphosphooctonate aldolase (282 aa).

It belongs to the KdsA family.

Its subcellular location is the cytoplasm. It catalyses the reaction D-arabinose 5-phosphate + phosphoenolpyruvate + H2O = 3-deoxy-alpha-D-manno-2-octulosonate-8-phosphate + phosphate. Its pathway is carbohydrate biosynthesis; 3-deoxy-D-manno-octulosonate biosynthesis; 3-deoxy-D-manno-octulosonate from D-ribulose 5-phosphate: step 2/3. It functions in the pathway bacterial outer membrane biogenesis; lipopolysaccharide biosynthesis. This is 2-dehydro-3-deoxyphosphooctonate aldolase from Shewanella halifaxensis (strain HAW-EB4).